Consider the following 291-residue polypeptide: 4-diphosphocytidyl-2-C-methyl-D-erythritol kinase (291 aa).

Residue K11 is part of the active site. 97–107 (PVAAGIGGGSS) is an ATP binding site. D139 is an active-site residue.

Belongs to the GHMP kinase family. IspE subfamily.

The catalysed reaction is 4-CDP-2-C-methyl-D-erythritol + ATP = 4-CDP-2-C-methyl-D-erythritol 2-phosphate + ADP + H(+). The protein operates within isoprenoid biosynthesis; isopentenyl diphosphate biosynthesis via DXP pathway; isopentenyl diphosphate from 1-deoxy-D-xylulose 5-phosphate: step 3/6. Catalyzes the phosphorylation of the position 2 hydroxy group of 4-diphosphocytidyl-2C-methyl-D-erythritol. This Methylorubrum extorquens (strain CM4 / NCIMB 13688) (Methylobacterium extorquens) protein is 4-diphosphocytidyl-2-C-methyl-D-erythritol kinase.